The chain runs to 318 residues: MSDSNLSDNHLPDTFFLTGIPGLEAAHFWIAIPFCAMYLVALVGNAALILVIAMDNALHAPMYLFLCLLSLTDLALSSTTVPKMLAILWLHAGEISFGGCLAQMFCVHSIYALESSILLAMAFDRYVAICNPLRYTTILNHAVIGRIGFVGLFRSVAIVSPFIFLLRRLPYCGHRVMTHTYCEHMGIARLACANITVNIVYGLTVALLAMGLDSILIAISYGFILHAVFHLPSHDAQHKALSTCGSHIGIILVFYIPAFFSFLTHRFGHHEVPKHVHIFLANLYVLVPPVLNPILYGARTKEIRSRLLKLLHLGKTSI.

Residues 1-28 (MSDSNLSDNHLPDTFFLTGIPGLEAAHF) lie on the Extracellular side of the membrane. A glycan (N-linked (GlcNAc...) asparagine) is linked at Asn5. Residues 29–49 (WIAIPFCAMYLVALVGNAALI) form a helical membrane-spanning segment. Topologically, residues 50–57 (LVIAMDNA) are cytoplasmic. The chain crosses the membrane as a helical span at residues 58-78 (LHAPMYLFLCLLSLTDLALSS). Topologically, residues 79–102 (TTVPKMLAILWLHAGEISFGGCLA) are extracellular. Cys100 and Cys192 are joined by a disulfide. The chain crosses the membrane as a helical span at residues 103–123 (QMFCVHSIYALESSILLAMAF). Residues 124 to 142 (DRYVAICNPLRYTTILNHA) are Cytoplasmic-facing. Residues 143 to 163 (VIGRIGFVGLFRSVAIVSPFI) traverse the membrane as a helical segment. Residues 164 to 199 (FLLRRLPYCGHRVMTHTYCEHMGIARLACANITVNI) are Extracellular-facing. A helical membrane pass occupies residues 200-220 (VYGLTVALLAMGLDSILIAIS). Residues 221 to 240 (YGFILHAVFHLPSHDAQHKA) are Cytoplasmic-facing. A helical transmembrane segment spans residues 241–261 (LSTCGSHIGIILVFYIPAFFS). The Extracellular segment spans residues 262–277 (FLTHRFGHHEVPKHVH). Residues 278 to 298 (IFLANLYVLVPPVLNPILYGA) form a helical membrane-spanning segment. Topologically, residues 299–318 (RTKEIRSRLLKLLHLGKTSI) are cytoplasmic.

The protein belongs to the G-protein coupled receptor 1 family.

Its subcellular location is the cell membrane. In terms of biological role, odorant receptor. This chain is Olfactory receptor 52D1 (OR52D1), found in Homo sapiens (Human).